Here is an 84-residue protein sequence, read N- to C-terminus: Minor capsid protein P30 (84 aa).

Dimer.

Its subcellular location is the virion. Its function is as follows. Minor capsid protein essential for stable capsid assembly of complete particles. The sequence is that of Minor capsid protein P30 (XXX) from Enterobacteria phage PRD1 (Bacteriophage PRD1).